Consider the following 142-residue polypeptide: Large ribosomal subunit protein uL16 (142 aa).

Belongs to the universal ribosomal protein uL16 family. As to quaternary structure, part of the 50S ribosomal subunit.

In terms of biological role, binds 23S rRNA and is also seen to make contacts with the A and possibly P site tRNAs. This chain is Large ribosomal subunit protein uL16, found in Thermotoga neapolitana (strain ATCC 49049 / DSM 4359 / NBRC 107923 / NS-E).